The following is a 202-amino-acid chain: Coiled-coil domain-containing protein 69 (202 aa).

Positions 1-11 are enriched in basic residues; the sequence is MGCRQSRHSRG. 2 disordered regions span residues 1–20 and 32–52; these read MGCRQSRHSRGKRAEKVEET and GRILEGRHEEAGQVPQTSNAQ. Residue G2 is the site of N-myristoyl glycine attachment. Residues 32–42 show a composition bias toward basic and acidic residues; the sequence is GRILEGRHEEA. Residue S92 is modified to Phosphoserine. A coiled-coil region spans residues 112–146; the sequence is WEQELESLHHVIEMKNERIHELEKQLFLLEMLKEK.

Belongs to the CCDC69 family.

The protein localises to the cytoplasm. It is found in the cytoskeleton. Its subcellular location is the spindle. It localises to the midbody. Its function is as follows. May act as a scaffold to regulate the recruitment and assembly of spindle midzone components. Required for the localization of AURKB and PLK1 to the spindle midzone. This Mus musculus (Mouse) protein is Coiled-coil domain-containing protein 69 (Ccdc69).